The following is a 176-amino-acid chain: Negative modulator of initiation of replication (176 aa).

It belongs to the SeqA family. As to quaternary structure, homodimer. Polymerizes to form helical filaments.

The protein localises to the cytoplasm. Its function is as follows. Negative regulator of replication initiation, which contributes to regulation of DNA replication and ensures that replication initiation occurs exactly once per chromosome per cell cycle. Binds to pairs of hemimethylated GATC sequences in the oriC region, thus preventing assembly of replication proteins and re-initiation at newly replicated origins. Repression is relieved when the region becomes fully methylated. The sequence is that of Negative modulator of initiation of replication from Hamiltonella defensa subsp. Acyrthosiphon pisum (strain 5AT).